The sequence spans 512 residues: ATP synthase subunit alpha (512 aa).

169–176 (GDRQTGKT) contributes to the ATP binding site.

It belongs to the ATPase alpha/beta chains family. In terms of assembly, F-type ATPases have 2 components, CF(1) - the catalytic core - and CF(0) - the membrane proton channel. CF(1) has five subunits: alpha(3), beta(3), gamma(1), delta(1), epsilon(1). CF(0) has three main subunits: a(1), b(2) and c(9-12). The alpha and beta chains form an alternating ring which encloses part of the gamma chain. CF(1) is attached to CF(0) by a central stalk formed by the gamma and epsilon chains, while a peripheral stalk is formed by the delta and b chains.

It localises to the cell inner membrane. It catalyses the reaction ATP + H2O + 4 H(+)(in) = ADP + phosphate + 5 H(+)(out). In terms of biological role, produces ATP from ADP in the presence of a proton gradient across the membrane. The alpha chain is a regulatory subunit. The sequence is that of ATP synthase subunit alpha from Orientia tsutsugamushi (strain Boryong) (Rickettsia tsutsugamushi).